A 250-amino-acid polypeptide reads, in one-letter code: 5-oxoprolinase subunit A (250 aa).

Belongs to the LamB/PxpA family. Forms a complex composed of PxpA, PxpB and PxpC.

The enzyme catalyses 5-oxo-L-proline + ATP + 2 H2O = L-glutamate + ADP + phosphate + H(+). Catalyzes the cleavage of 5-oxoproline to form L-glutamate coupled to the hydrolysis of ATP to ADP and inorganic phosphate. The polypeptide is 5-oxoprolinase subunit A (Paraburkholderia xenovorans (strain LB400)).